We begin with the raw amino-acid sequence, 356 residues long: S-adenosylmethionine:tRNA ribosyltransferase-isomerase (356 aa).

It belongs to the QueA family. In terms of assembly, monomer.

The protein localises to the cytoplasm. It carries out the reaction 7-aminomethyl-7-carbaguanosine(34) in tRNA + S-adenosyl-L-methionine = epoxyqueuosine(34) in tRNA + adenine + L-methionine + 2 H(+). The protein operates within tRNA modification; tRNA-queuosine biosynthesis. Its function is as follows. Transfers and isomerizes the ribose moiety from AdoMet to the 7-aminomethyl group of 7-deazaguanine (preQ1-tRNA) to give epoxyqueuosine (oQ-tRNA). This chain is S-adenosylmethionine:tRNA ribosyltransferase-isomerase, found in Serratia proteamaculans (strain 568).